Reading from the N-terminus, the 29-residue chain is Dander allergen Equ c 2.0101 (29 aa).

The protein belongs to the calycin superfamily. Lipocalin family.

It localises to the secreted. The protein is Dander allergen Equ c 2.0101 of Equus caballus (Horse).